The primary structure comprises 478 residues: Adenosylhomocysteinase (478 aa).

Substrate is bound by residues threonine 57, aspartate 139, and glutamate 201. NAD(+) is bound at residue 202 to 204; sequence TTT. Residues lysine 231 and aspartate 235 each coordinate substrate. NAD(+) contacts are provided by residues asparagine 236, 265-270, glutamate 288, asparagine 323, 344-346, and asparagine 392; these read GYGDVG and IGH.

The protein belongs to the adenosylhomocysteinase family. NAD(+) serves as cofactor.

The protein resides in the cytoplasm. It catalyses the reaction S-adenosyl-L-homocysteine + H2O = L-homocysteine + adenosine. It functions in the pathway amino-acid biosynthesis; L-homocysteine biosynthesis; L-homocysteine from S-adenosyl-L-homocysteine: step 1/1. Its function is as follows. May play a key role in the regulation of the intracellular concentration of adenosylhomocysteine. The sequence is that of Adenosylhomocysteinase from Corynebacterium glutamicum (strain R).